A 168-amino-acid chain; its full sequence is Ubiquitin-conjugating enzyme E2 7 (168 aa).

The tract at residues 1–21 (MATAPARRASSSRSSSEISRT) is disordered. The UBC core domain maps to 6–166 (ARRASSSRSS…VRRAVRKSQE (161 aa)). Cys92 (glycyl thioester intermediate) is an active-site residue.

The protein belongs to the ubiquitin-conjugating enzyme family.

The enzyme catalyses S-ubiquitinyl-[E1 ubiquitin-activating enzyme]-L-cysteine + [E2 ubiquitin-conjugating enzyme]-L-cysteine = [E1 ubiquitin-activating enzyme]-L-cysteine + S-ubiquitinyl-[E2 ubiquitin-conjugating enzyme]-L-cysteine.. It participates in protein modification; protein ubiquitination. Its function is as follows. Catalyzes the covalent attachment of ubiquitin to other proteins so as to signal them for selective protein degradation. Involved in the formation of multiubiquitin chains. The sequence is that of Ubiquitin-conjugating enzyme E2 7 (UBC7) from Triticum aestivum (Wheat).